A 591-amino-acid chain; its full sequence is Glutathione S-transferase T2 (591 aa).

In terms of domain architecture, GST N-terminal spans 1-82 (MKLKVYADRM…YLSSAYASVV (82 aa)). Glutathione-binding positions include 11–12 (SQ), 40–41 (QL), 53–54 (KV), and 66–67 (ES). One can recognise a GST C-terminal domain in the interval 89–226 (DLSKRAKIHS…EVLFRAKDRF (138 aa)). A disordered region spans residues 229 to 272 (QREMATASKPGPQSKIIQFSSIGGTSDGPNLVQDTTDRKARRRK). Over residues 243–262 (KIIQFSSIGGTSDGPNLVQD) the composition is skewed to polar residues. The region spanning 265 to 338 (DRKARRRKWS…HCRQRWRKIN (74 aa)) is the Myb-like domain.

This sequence belongs to the GST superfamily. Theta family.

It is found in the peroxisome. It carries out the reaction RX + glutathione = an S-substituted glutathione + a halide anion + H(+). Functionally, may be involved in the conjugation of reduced glutathione to a wide number of exogenous and endogenous hydrophobic electrophiles and have a detoxification role against certain herbicides. This is Glutathione S-transferase T2 (GSTT2) from Arabidopsis thaliana (Mouse-ear cress).